A 141-amino-acid polypeptide reads, in one-letter code: Hemoglobin subunit alpha (141 aa).

In terms of domain architecture, Globin spans 1–141; the sequence is VLSSTDKSNV…VSTVLTSKYR (141 aa). Residue Ser3 is modified to Phosphoserine. Lys7 and Lys11 each carry N6-succinyllysine. Residue Lys16 is modified to N6-acetyllysine; alternate. At Lys16 the chain carries N6-succinyllysine; alternate. A Phosphotyrosine modification is found at Tyr24. Phosphoserine is present on Ser35. Lys40 carries the N6-succinyllysine modification. An O2-binding site is contributed by His58. Heme b is bound at residue His87. Ser102 bears the Phosphoserine mark. Thr108 is subject to Phosphothreonine. 2 positions are modified to phosphoserine: Ser124 and Ser131. Thr134 and Thr137 each carry phosphothreonine. The residue at position 138 (Ser138) is a Phosphoserine.

This sequence belongs to the globin family. In terms of assembly, heterotetramer of two alpha chains and two beta chains. In terms of tissue distribution, red blood cells.

Involved in oxygen transport from the lung to the various peripheral tissues. Its function is as follows. Hemopressin acts as an antagonist peptide of the cannabinoid receptor CNR1. Hemopressin-binding efficiently blocks cannabinoid receptor CNR1 and subsequent signaling. This is Hemoglobin subunit alpha (HBA) from Pteropus poliocephalus (Grey-headed flying fox).